The chain runs to 126 residues: MAIWQGSSLRKPSGARSRRNKNKRNAEFGRNPAETRIGDEVKKEIVARGNCTKTRATVAKRINVIDPKDNSSKNVEMLTVLENGANSHFVRRNIITKGAIVETEIGKAKITSRPGQKGIVNGVLIE.

Residues 1–10 (MAIWQGSSLR) show a composition bias toward polar residues. Residues 1 to 35 (MAIWQGSSLRKPSGARSRRNKNKRNAEFGRNPAET) form a disordered region.

This sequence belongs to the eukaryotic ribosomal protein eS8 family. Part of the 30S ribosomal subunit.

In Methanosphaera stadtmanae (strain ATCC 43021 / DSM 3091 / JCM 11832 / MCB-3), this protein is Small ribosomal subunit protein eS8.